Reading from the N-terminus, the 414-residue chain is WW domain-containing oxidoreductase (414 aa).

The interval 1 to 23 (MAALKYAGLEDTDSEEELPPGWE) is disordered. Positions 16-49 (EELPPGWEERTTKDGWVYYANHLEEKTQWEHPKS) constitute a WW 1 domain. Positions 50-55 (GKRKRV) match the Nuclear localization signal motif. Positions 57–90 (GGLPYGWEQETDENGQVYFVDHINKRTTYLDPRL) constitute a WW 2 domain. Residue 131–137 (GANSGIG) coordinates NADP(+). A substrate-binding site is contributed by serine 260. The Proton acceptor role is filled by tyrosine 293.

It belongs to the short-chain dehydrogenases/reductases (SDR) family.

The protein localises to the cytoplasm. Its subcellular location is the mitochondrion. The protein resides in the golgi apparatus. It localises to the lysosome. Functionally, putative oxidoreductase. Acts as a tumor suppressor and plays a role in apoptosis. May function synergistically with p53/TP53 to control genotoxic stress-induced cell death. Plays a role in TGFB1 signaling and TGFB1-mediated cell death. May also play a role in tumor necrosis factor (TNF)-mediated cell death. Required for normal bone development. Inhibits Wnt signaling. The chain is WW domain-containing oxidoreductase (WWOX) from Gallus gallus (Chicken).